Consider the following 752-residue polypeptide: Double zinc ribbon and ankyrin repeat-containing protein 1 (752 aa).

A phosphoserine mark is found at Ser160 and Ser182. Residues 164–187 are disordered; that stretch reads IPAYGGGSGSRPPTRQSQSPGFAH. The span at 174-183 shows a compositional bias: polar residues; that stretch reads RPPTRQSQSP. DZANK-type zinc fingers lie at residues 211–270 and 339–387; these read CAHC…CVVC and CYRC…GSCG. 2 ANK repeats span residues 605–636 and 640–669; these read ENRL…DPNC and DNRP…DIDQ.

As to quaternary structure, interacts with NINL isoform 2. Associates with DYNC1H1 and multiple dynein intermediate and light chains as well as actin-binding proteins.

The protein localises to the cytoplasm. It is found in the cytoskeleton. Its subcellular location is the microtubule organizing center. The protein resides in the centrosome. It localises to the cilium basal body. Involved in vesicle transport in photoreceptor cells. This chain is Double zinc ribbon and ankyrin repeat-containing protein 1, found in Homo sapiens (Human).